The chain runs to 157 residues: SsrA-binding protein (157 aa).

The protein belongs to the SmpB family.

It is found in the cytoplasm. Functionally, required for rescue of stalled ribosomes mediated by trans-translation. Binds to transfer-messenger RNA (tmRNA), required for stable association of tmRNA with ribosomes. tmRNA and SmpB together mimic tRNA shape, replacing the anticodon stem-loop with SmpB. tmRNA is encoded by the ssrA gene; the 2 termini fold to resemble tRNA(Ala) and it encodes a 'tag peptide', a short internal open reading frame. During trans-translation Ala-aminoacylated tmRNA acts like a tRNA, entering the A-site of stalled ribosomes, displacing the stalled mRNA. The ribosome then switches to translate the ORF on the tmRNA; the nascent peptide is terminated with the 'tag peptide' encoded by the tmRNA and targeted for degradation. The ribosome is freed to recommence translation, which seems to be the essential function of trans-translation. The chain is SsrA-binding protein from Rhodococcus jostii (strain RHA1).